We begin with the raw amino-acid sequence, 148 residues long: SPbeta prophage-derived uncharacterized protein YomK (148 aa).

Transmembrane regions (helical) follow at residues 72–92 and 104–124; these read WGIG…LFGV and NALI…RNII.

Its subcellular location is the cell membrane. This is SPbeta prophage-derived uncharacterized protein YomK (yomK) from Bacillus subtilis (strain 168).